Reading from the N-terminus, the 429-residue chain is C4-dicarboxylate transport protein (429 aa).

8 helical membrane passes run 9-29 (VLYV…HFYP), 45-65 (LIKM…IAGM), 79-99 (LLYF…ATHI), 149-169 (GEIL…AHLG), 185-205 (VLFG…FGAM), 223-243 (LIGT…GTIA), 308-328 (IYMT…LTWM), and 356-376 (AATL…ILGI).

Belongs to the dicarboxylate/amino acid:cation symporter (DAACS) (TC 2.A.23) family.

It is found in the cell inner membrane. Its function is as follows. Responsible for the transport of dicarboxylates such as succinate, fumarate, and malate from the periplasm across the membrane. This Burkholderia ambifaria (strain MC40-6) protein is C4-dicarboxylate transport protein.